Consider the following 496-residue polypeptide: Glutamyl-tRNA(Gln) amidotransferase subunit A (496 aa).

Residues Lys79 and Ser159 each act as charge relay system in the active site. The active-site Acyl-ester intermediate is Ser183.

This sequence belongs to the amidase family. GatA subfamily. Heterotrimer of A, B and C subunits.

It catalyses the reaction L-glutamyl-tRNA(Gln) + L-glutamine + ATP + H2O = L-glutaminyl-tRNA(Gln) + L-glutamate + ADP + phosphate + H(+). In terms of biological role, allows the formation of correctly charged Gln-tRNA(Gln) through the transamidation of misacylated Glu-tRNA(Gln) in organisms which lack glutaminyl-tRNA synthetase. The reaction takes place in the presence of glutamine and ATP through an activated gamma-phospho-Glu-tRNA(Gln). This is Glutamyl-tRNA(Gln) amidotransferase subunit A from Ruegeria pomeroyi (strain ATCC 700808 / DSM 15171 / DSS-3) (Silicibacter pomeroyi).